An 85-amino-acid chain; its full sequence is PI-stichotoxin-Hcr2i (85 aa).

The N-terminal stretch at M1–G22 is a signal peptide. Residues F23–Q29 constitute a propeptide that is removed on maturation. Residues C33–C83 enclose the BPTI/Kunitz inhibitor domain. Intrachain disulfides connect C33/C83, C42/C66, and C58/C79.

It belongs to the venom Kunitz-type family. Sea anemone type 2 potassium channel toxin subfamily.

Its subcellular location is the secreted. It is found in the nematocyst. Its function is as follows. Serine protease inhibitor that also shows protective effect in a cytotoxicity model. It binds to all proteases tested (trypsin (Ki=52 nM), alpha-chymotrypsin, cathepsin G, kallikrein, and human neutrophil elastase). It significantly increases neuroblastoma cell viability in an in vitro neurotoxicity model, being a consequence of an effective decrease of reactive oxygen species (ROS) level in the cells. It also seems to protect cells by inhibiting ATP-induced purinoceptor (P2RX7) activation. The protein is PI-stichotoxin-Hcr2i of Radianthus crispa (Leathery sea anemone).